The sequence spans 235 residues: Sugar fermentation stimulation protein homolog (235 aa).

The protein belongs to the SfsA family.

This is Sugar fermentation stimulation protein homolog from Ectopseudomonas mendocina (strain ymp) (Pseudomonas mendocina).